Reading from the N-terminus, the 1597-residue chain is Transmembrane protein 131-like (1597 aa).

The first 40 residues, 1–40 (MAGLRRPQSGAYRRTAAAVNLLLGVFQVLLSCCRPGGAQG), serve as a signal peptide directing secretion. At 41–869 (QAFEPLPNVV…VVPGPSWEES (829 aa)) the chain is on the extracellular side. N-linked (GlcNAc...) asparagine glycans are attached at residues asparagine 343, asparagine 593, asparagine 709, and asparagine 846. Residues 696–916 (DYGKVTSLIL…QNGSSSSQQN (221 aa)) are required for Wnt-signaling inhibition and LRP6 degradation. Residues 870–890 (FWRLTVFFVSLSLLGVILIAF) form a helical membrane-spanning segment. Residues 891 to 1597 (QQAQYILMEF…SRDSSYCGNM (707 aa)) lie on the Cytoplasmic side of the membrane. Low complexity predominate over residues 907–917 (QNGSSSSQQNG). Disordered stretches follow at residues 907 to 928 (QNGS…SHPH), 1096 to 1240 (AELK…EQRL), and 1252 to 1322 (DGAG…SDCD). Positions 1213–1222 (RPCRRNKKRA) are enriched in basic residues. Low complexity predominate over residues 1223–1239 (SAQASSSPRPSEQSEQR). The segment covering 1269 to 1290 (PERREEDSYYQKSEKKCADKFC) has biased composition (basic and acidic residues). Residues 1291-1319 (SDSSSDCGSSSGSVRASRGSWGSWSSSSS) are compositionally biased toward low complexity.

The protein belongs to the TMEM131 family.

It localises to the cell membrane. The protein resides in the endoplasmic reticulum. It is found in the cytoplasm. In its membrane-associated form, antagonizes canonical Wnt signaling by triggering lysosome-dependent degradation of Wnt-activated LRP6. Regulates thymocyte proliferation. This chain is Transmembrane protein 131-like, found in Mus musculus (Mouse).